A 290-amino-acid polypeptide reads, in one-letter code: Ribosomal RNA small subunit methyltransferase A (290 aa).

Positions 27, 29, 54, 75, 100, and 125 each coordinate S-adenosyl-L-methionine.

The protein belongs to the class I-like SAM-binding methyltransferase superfamily. rRNA adenine N(6)-methyltransferase family. RsmA subfamily.

The protein resides in the cytoplasm. It carries out the reaction adenosine(1518)/adenosine(1519) in 16S rRNA + 4 S-adenosyl-L-methionine = N(6)-dimethyladenosine(1518)/N(6)-dimethyladenosine(1519) in 16S rRNA + 4 S-adenosyl-L-homocysteine + 4 H(+). Specifically dimethylates two adjacent adenosines (A1518 and A1519) in the loop of a conserved hairpin near the 3'-end of 16S rRNA in the 30S particle. May play a critical role in biogenesis of 30S subunits. This Streptococcus sanguinis (strain SK36) protein is Ribosomal RNA small subunit methyltransferase A.